The sequence spans 426 residues: UDP-N-acetylglucosamine 1-carboxyvinyltransferase (426 aa).

Residue 23-24 (KN) participates in phosphoenolpyruvate binding. A UDP-N-acetyl-alpha-D-glucosamine-binding site is contributed by Arg99. The active-site Proton donor is Asp123. Positions 311 and 333 each coordinate UDP-N-acetyl-alpha-D-glucosamine.

This sequence belongs to the EPSP synthase family. MurA subfamily.

Its subcellular location is the cytoplasm. The enzyme catalyses phosphoenolpyruvate + UDP-N-acetyl-alpha-D-glucosamine = UDP-N-acetyl-3-O-(1-carboxyvinyl)-alpha-D-glucosamine + phosphate. The protein operates within cell wall biogenesis; peptidoglycan biosynthesis. Cell wall formation. Adds enolpyruvyl to UDP-N-acetylglucosamine. The chain is UDP-N-acetylglucosamine 1-carboxyvinyltransferase from Nocardia farcinica (strain IFM 10152).